The sequence spans 2533 residues: Highly reducing polyketide synthase azaB (2533 aa).

In terms of domain architecture, Ketosynthase family 3 (KS3) spans 7–433 (TAPMAIIGMA…GSNAHAILES (427 aa)). Residues C180, H315, and H355 each act as for beta-ketoacyl synthase activity in the active site. Residues 554 to 821 (WVFTGQGAQW…VEFESSFRHM (268 aa)) are malonyl-CoA:ACP transacylase (MAT) domain. The interval 946–1081 (SDLVGYSQPS…GRISVITTSD (136 aa)) is N-terminal hotdog fold. In terms of domain architecture, PKS/mFAS DH spans 946 to 1254 (SDLVGYSQPS…CQSLGRALDR (309 aa)). The interval 947-1251 (DLVGYSQPSI…GLTCQSLGRA (305 aa)) is dehydratase (DH) domain. The Proton acceptor; for dehydratase activity role is filled by H978. The interval 1097-1254 (YNRRIDPRYM…CQSLGRALDR (158 aa)) is C-terminal hotdog fold. D1163 acts as the Proton donor; for dehydratase activity in catalysis. The methyltransferase (CMet) domain stretch occupies residues 1419-1554 (TRQVSELVRL…GGKLILMETT (136 aa)). The segment at 1839–2155 (GLIDTLVFHD…TGQHMGKIII (317 aa)) is enoyl reductase (ER) domain. Positions 2178 to 2349 (ASYVIVGGLG…AVSLDLGIVR (172 aa)) are ketoreductase (KR) domain. A Carrier domain is found at 2455-2532 (DAAALICQEL…DLSLRVATKR (78 aa)). O-(pantetheine 4'-phosphoryl)serine is present on S2492.

Its pathway is secondary metabolite biosynthesis. In terms of biological role, highly reducing polyketide synthase; part of the gene cluster that mediates the biosynthesis of azaphilones, a class of fungal metabolites characterized by a highly oxygenated pyrano-quinone bicyclic core and exhibiting a broad range of bioactivities. In the first step, the non-reducing polyketide synthase azaA forms the hexaketide precursor from successive condensations of five malonyl-CoA units, presumably with a simple acetyl-CoA starter unit. The reactive polyketide chain then undergoes a PT-mediated C2-C7 cyclization to afford the aromatic ring and is eventually released as an aldehyde through the R-domain. The putative ketoreductase azaE is proposed to catalyze the reduction of the terminal ketone resulting in the early culture product FK17-P2a. The monooxygenase azaH was demonstrated to be the only enzyme required to convert FK17-P2a to azanigerone E. AzaH first hydroxylates the benzaldehyde intermediate FK17-P2a at C4, which triggers the formation of the pyran-ring to afford azanigerone E. In parallel, the 2,4-dimethylhexanoyl chain is synthesized by the HR-PKS azaB and is proposed to be transferred to the C4-hydroxyl of azanigerone E by the acyltransferase azaD directly from the ACP domain of azaB. Alternatively, the 2,4-dimethyl-hexanoyl chain may be offloaded from the HR-PKS as a carboxylic acid and converted to an acyl-CoA by azaF. The resulting acyl-CoA molecule could then be taken up as a substrate by AzaD to form azanigerone B. To yield the carboxylic acid substituent in azanigerone A, the hydroxypropyl side chain of azanigerone B would need to undergo a C-C oxidative cleavage catalyzed by cytochrome P450 AzaI. AzaI is proposed to act on a vicinal diol that leads to a C-C bond scission either through an alkoxyradical intermediate or a peroxy complex. In the biosynthesis of azanigerone A, azanigerone B first undergoes hydroxylation at C10, possibly catalyzed by one of the two FAD-dependent monooxygenases encoded in the cluster, azaG or azaL, resulting in the vicinal diol azanigerone C. Oxidative cleavage of azanigerone C by azaI would yield the corresponding aldehyde derivative of azanigerone A. Finally, the dehydrogenase azaJ is proposed to convert the aldehyde functional group into the carboxylic acid, completing the conversion from azanigerone B to azanigerone A. Alternatively, the oxidation of aldehyde to carboxylic acid may be catalyzed by the same P450 enzyme azaI via consecutive oxidation or by endogenous alcohol dehydrogenase. The chain is Highly reducing polyketide synthase azaB from Aspergillus niger (strain ATCC 1015 / CBS 113.46 / FGSC A1144 / LSHB Ac4 / NCTC 3858a / NRRL 328 / USDA 3528.7).